Reading from the N-terminus, the 190-residue chain is Nucleoside triphosphate pyrophosphatase (190 aa).

Asp-69 serves as the catalytic Proton acceptor.

The protein belongs to the Maf family. The cofactor is a divalent metal cation.

It is found in the cytoplasm. It carries out the reaction a ribonucleoside 5'-triphosphate + H2O = a ribonucleoside 5'-phosphate + diphosphate + H(+). The catalysed reaction is a 2'-deoxyribonucleoside 5'-triphosphate + H2O = a 2'-deoxyribonucleoside 5'-phosphate + diphosphate + H(+). Its function is as follows. Nucleoside triphosphate pyrophosphatase. May have a dual role in cell division arrest and in preventing the incorporation of modified nucleotides into cellular nucleic acids. The sequence is that of Nucleoside triphosphate pyrophosphatase from Helicobacter pylori (strain HPAG1).